A 98-amino-acid chain; its full sequence is Citrate lyase acyl carrier protein (98 aa).

Ser-14 is subject to O-(phosphoribosyl dephospho-coenzyme A)serine.

This sequence belongs to the CitD family. As to quaternary structure, oligomer with a subunit composition of (alpha,beta,gamma)6.

It is found in the cytoplasm. Functionally, covalent carrier of the coenzyme of citrate lyase. The chain is Citrate lyase acyl carrier protein from Shigella boydii serotype 4 (strain Sb227).